A 166-amino-acid chain; its full sequence is Peptidyl-prolyl cis-trans isomerase cyp18 (166 aa).

Residues 2–164 form the PPIase cyclophilin-type domain; the sequence is STVELNTSAG…QPVVIESAKI (163 aa).

This sequence belongs to the cyclophilin-type PPIase family. Monomer.

It is found in the cytoplasm. The catalysed reaction is [protein]-peptidylproline (omega=180) = [protein]-peptidylproline (omega=0). With respect to regulation, inhibition by cyclosporin A with a Ki of 21 mu-mol. Its function is as follows. PPIases accelerate the folding of proteins. It catalyzes the cis-trans isomerization of proline imidic peptide bonds in oligopeptides. This is Peptidyl-prolyl cis-trans isomerase cyp18 from Streptomyces antibioticus.